A 406-amino-acid polypeptide reads, in one-letter code: GTPase Obg (406 aa).

An Obg domain is found at 1 to 159 (MRFVDEAVIT…REIRLELKVL (159 aa)). The tract at residues 120–143 (GGEGGLGNTHFKSSTNRAPRKCTT) is disordered. Residues 160–333 (ADVGLLGMPN…VVYYLMDQIE (174 aa)) enclose the OBG-type G domain. Residues 166 to 173 (GMPNAGKS), 191 to 195 (FTTMV), 213 to 216 (DIPG), 283 to 286 (NKLD), and 314 to 316 (SGL) contribute to the GTP site. Positions 173 and 193 each coordinate Mg(2+). Residues 381–406 (ESMMDDDDDFDDDEDDGDVESIYVRD) are disordered. The span at 383–399 (MMDDDDDFDDDEDDGDV) shows a compositional bias: acidic residues.

The protein belongs to the TRAFAC class OBG-HflX-like GTPase superfamily. OBG GTPase family. As to quaternary structure, monomer. Mg(2+) is required as a cofactor.

It localises to the cytoplasm. Its function is as follows. An essential GTPase which binds GTP, GDP and possibly (p)ppGpp with moderate affinity, with high nucleotide exchange rates and a fairly low GTP hydrolysis rate. Plays a role in control of the cell cycle, stress response, ribosome biogenesis and in those bacteria that undergo differentiation, in morphogenesis control. This chain is GTPase Obg, found in Acinetobacter baumannii (strain SDF).